A 951-amino-acid polypeptide reads, in one-letter code: Thyroid hormone receptor-associated protein 3 (951 aa).

Residues methionine 1 to serine 13 are compositionally biased toward low complexity. A disordered region spans residues methionine 1 to tyrosine 94. Serine 2 is subject to N-acetylserine. The interval serine 2–serine 190 is required for mRNA splicing activation. The segment covering serine 14–serine 51 has biased composition (basic residues). The residue at position 17 (arginine 17) is a Dimethylated arginine. Basic and acidic residues predominate over residues histidine 58–glycine 75. Arginine 66 is modified (asymmetric dimethylarginine). The span at arginine 82–tyrosine 94 shows a compositional bias: low complexity. Residues arginine 101 and arginine 108 each carry the asymmetric dimethylarginine modification. The tract at residues alanine 117–phenylalanine 558 is disordered. Residues arginine 121–serine 143 are compositionally biased toward basic residues. Basic and acidic residues predominate over residues arginine 144–arginine 155. A compositionally biased stretch (low complexity) spans serine 157–histidine 166. The span at serine 167–arginine 188 shows a compositional bias: basic and acidic residues. Lysine 202 participates in a covalent cross-link: Glycyl lysine isopeptide (Lys-Gly) (interchain with G-Cter in SUMO1); alternate. Lysine 202 participates in a covalent cross-link: Glycyl lysine isopeptide (Lys-Gly) (interchain with G-Cter in SUMO2); alternate. Residues glutamine 204–serine 220 show a composition bias toward polar residues. Residue lysine 215 forms a Glycyl lysine isopeptide (Lys-Gly) (interchain with G-Cter in SUMO2) linkage. The residue at position 220 (serine 220) is a Phosphoserine. Lysine 221 participates in a covalent cross-link: Glycyl lysine isopeptide (Lys-Gly) (interchain with G-Cter in SUMO2); alternate. Lysine 221 carries the N6-acetyllysine; alternate modification. Phosphoserine occurs at positions 233, 238, 240, 243, and 248. Residue lysine 252 forms a Glycyl lysine isopeptide (Lys-Gly) (interchain with G-Cter in SUMO2); alternate linkage. Lysine 252 is modified (N6-methyllysine; alternate). Phosphoserine is present on residues serine 253 and serine 257. The segment covering arginine 266–proline 276 has biased composition (pro residues). The span at glycine 305–proline 322 shows a compositional bias: low complexity. Phosphoserine is present on residues serine 315 and serine 320. Threonine 324 is subject to Phosphothreonine. Serine 326 carries the phosphoserine modification. Tyrosine 328 is modified (phosphotyrosine). A Glycyl lysine isopeptide (Lys-Gly) (interchain with G-Cter in SUMO2) cross-link involves residue lysine 333. Low complexity predominate over residues alanine 337–lysine 346. Serine 339 carries the phosphoserine modification. Lysine 346 participates in a covalent cross-link: Glycyl lysine isopeptide (Lys-Gly) (interchain with G-Cter in SUMO2); alternate. Lysine 346 bears the N6-acetyllysine; alternate mark. Over residues arginine 347 to serine 387 the composition is skewed to basic and acidic residues. Residues lysine 353 and lysine 375 each participate in a glycyl lysine isopeptide (Lys-Gly) (interchain with G-Cter in SUMO2) cross-link. The required for mRNA decay activity stretch occupies residues aspartate 359–glutamate 951. Serine 379 carries the phosphoserine modification. Lysine 384 is covalently cross-linked (Glycyl lysine isopeptide (Lys-Gly) (interchain with G-Cter in SUMO1); alternate). A Glycyl lysine isopeptide (Lys-Gly) (interchain with G-Cter in SUMO2); alternate cross-link involves residue lysine 384. Glycyl lysine isopeptide (Lys-Gly) (interchain with G-Cter in SUMO2) cross-links involve residues lysine 386 and lysine 393. Threonine 394 carries the post-translational modification Phosphothreonine. Lysine 398 participates in a covalent cross-link: Glycyl lysine isopeptide (Lys-Gly) (interchain with G-Cter in SUMO2). Residues serine 403 and serine 405 each carry the phosphoserine modification. Positions leucine 411–phenylalanine 449 are enriched in basic and acidic residues. Glycyl lysine isopeptide (Lys-Gly) (interchain with G-Cter in SUMO2) cross-links involve residues lysine 418 and lysine 424. A Glycyl lysine isopeptide (Lys-Gly) (interchain with G-Cter in SUMO1); alternate cross-link involves residue lysine 448. Glycyl lysine isopeptide (Lys-Gly) (interchain with G-Cter in SUMO2); alternate cross-links involve residues lysine 448 and lysine 452. N6-acetyllysine; alternate is present on lysine 452. Residues lysine 459 and lysine 465 each participate in a glycyl lysine isopeptide (Lys-Gly) (interchain with G-Cter in SUMO2) cross-link. 2 stretches are compositionally biased toward basic and acidic residues: residues asparagine 460–glutamate 483 and phenylalanine 490–phenylalanine 518. Serine 466 carries the phosphoserine modification. Residues lysine 468 and lysine 476 each participate in a glycyl lysine isopeptide (Lys-Gly) (interchain with G-Cter in SUMO2); alternate cross-link. 2 positions are modified to N6-acetyllysine; alternate: lysine 468 and lysine 476. Residue lysine 481 forms a Glycyl lysine isopeptide (Lys-Gly) (interchain with G-Cter in SUMO2) linkage. Lysine 516 is subject to N6-acetyllysine. Residue lysine 524 forms a Glycyl lysine isopeptide (Lys-Gly) (interchain with G-Cter in SUMO2); alternate linkage. Lysine 524 carries the N6-acetyllysine; alternate modification. At serine 532 the chain carries Phosphoserine. Residues lysine 537–serine 547 show a composition bias toward basic and acidic residues. A Glycyl lysine isopeptide (Lys-Gly) (interchain with G-Cter in SUMO2) cross-link involves residue lysine 548. The span at lysine 548–phenylalanine 558 shows a compositional bias: low complexity. Glycine 549 to serine 556 contributes to the ATP binding site. A Glycyl lysine isopeptide (Lys-Gly) (interchain with G-Cter in SUMO2); alternate cross-link involves residue lysine 555. Lysine 555 carries the post-translational modification N6-acetyllysine; alternate. Phosphoserine occurs at positions 557, 559, and 572. Lysine 599 is covalently cross-linked (Glycyl lysine isopeptide (Lys-Gly) (interchain with G-Cter in SUMO2)). Residues serine 616, serine 619, serine 669, serine 679, and serine 681 each carry the phosphoserine modification. The segment covering glutamate 660 to aspartate 677 has biased composition (basic and acidic residues). The tract at residues glutamate 660 to glutamate 951 is disordered. Residues leucine 688–histidine 758 show a composition bias toward basic and acidic residues. Lysine 694 participates in a covalent cross-link: Glycyl lysine isopeptide (Lys-Gly) (interchain with G-Cter in SUMO2). Residue serine 695 is modified to Phosphoserine. Glycyl lysine isopeptide (Lys-Gly) (interchain with G-Cter in SUMO2) cross-links involve residues lysine 702, lysine 706, lysine 708, lysine 753, and lysine 756. Over residues lysine 759–aspartate 772 the composition is skewed to basic residues. Residues serine 776–serine 786 are compositionally biased toward low complexity. N6-acetyllysine is present on lysine 808. Arginine 841 carries the asymmetric dimethylarginine modification. The segment covering tyrosine 844–asparagine 854 has biased composition (low complexity). Position 860 is a phosphoserine (serine 860). Threonine 870 bears the Phosphothreonine mark. Residues lysine 872 and lysine 875 each participate in a glycyl lysine isopeptide (Lys-Gly) (interchain with G-Cter in SUMO2) cross-link. Residues tyrosine 877–methionine 891 are compositionally biased toward basic and acidic residues. Phosphoserine is present on residues serine 924 and serine 935. Acidic residues predominate over residues glutamate 926 to glycine 936.

It belongs to the BCLAF1/THRAP3 family. In terms of assembly, associated with the large multiprotein complex TRAP (Mediator complex-like). Interacts with SFPQ; the interaction is dependent on SFPQ phosphorylation at 'Thr-687' and inhibits binding of SFPQ to an ESS1 exonic splicing silencer element-containing RNA. Interacts with NXF1. Component of the SNARP complex which consists at least of SNIP1, SNW1, THRAP3, BCLAF1 and PNN. Associated with spliced mRNP complexes. Interacts with HELZ2 and PPARG. Interacts with CLOCK and BMAL1. Component of a MACOM-like complex, named WTAP complex, composed of WTAP, ZC3H13, CBLL1, KIAA1429, RBM15, BCLAF1 and THRAP3.

It localises to the nucleus. Its subcellular location is the nucleoplasm. The protein localises to the nucleus speckle. In terms of biological role, involved in pre-mRNA splicing. Remains associated with spliced mRNA after splicing which probably involves interactions with the exon junction complex (EJC). Can trigger mRNA decay which seems to be independent of nonsense-mediated decay involving premature stop codons (PTC) recognition. May be involved in nuclear mRNA decay. Involved in regulation of signal-induced alternative splicing. During splicing of PTPRC/CD45 is proposed to sequester phosphorylated SFPQ from PTPRC/CD45 pre-mRNA in resting T-cells. Involved in cyclin-D1/CCND1 mRNA stability probably by acting as component of the SNARP complex which associates with both the 3'end of the CCND1 gene and its mRNA. Involved in response to DNA damage. Is excluced from DNA damage sites in a manner that parallels transcription inhibition; the function may involve the SNARP complex. Initially thought to play a role in transcriptional coactivation through its association with the TRAP complex; however, it is not regarded as a stable Mediator complex subunit. Cooperatively with HELZ2, enhances the transcriptional activation mediated by PPARG, maybe through the stabilization of the PPARG binding to DNA in presence of ligand. May play a role in the terminal stage of adipocyte differentiation. Plays a role in the positive regulation of the circadian clock. Acts as a coactivator of the CLOCK-BMAL1 heterodimer and promotes its transcriptional activator activity and binding to circadian target genes. The polypeptide is Thyroid hormone receptor-associated protein 3 (Thrap3) (Mus musculus (Mouse)).